The primary structure comprises 445 residues: Tubulin beta-3 chain (445 aa).

8 residues coordinate GTP: Q11, E69, S138, G142, T143, G144, N204, and N226. E69 lines the Mg(2+) pocket. Residues 425–445 (YQDATAEEYDEEEQDGEEEHD) are disordered. Residues 429 to 445 (TAEEYDEEEQDGEEEHD) show a composition bias toward acidic residues.

Belongs to the tubulin family. As to quaternary structure, dimer of alpha and beta chains. A typical microtubule is a hollow water-filled tube with an outer diameter of 25 nm and an inner diameter of 15 nM. Alpha-beta heterodimers associate head-to-tail to form protofilaments running lengthwise along the microtubule wall with the beta-tubulin subunit facing the microtubule plus end conferring a structural polarity. Microtubules usually have 13 protofilaments but different protofilament numbers can be found in some organisms and specialized cells. Mg(2+) serves as cofactor.

It localises to the cytoplasm. Its subcellular location is the cytoskeleton. Functionally, tubulin is the major constituent of microtubules, a cylinder consisting of laterally associated linear protofilaments composed of alpha- and beta-tubulin heterodimers. Microtubules grow by the addition of GTP-tubulin dimers to the microtubule end, where a stabilizing cap forms. Below the cap, tubulin dimers are in GDP-bound state, owing to GTPase activity of alpha-tubulin. This chain is Tubulin beta-3 chain (TUBB3), found in Zea mays (Maize).